Reading from the N-terminus, the 270-residue chain is Bacterial microcompartment shell protein PduB (270 aa).

BMC circularly permuted domains are found at residues 47-152 and 154-262; these read EFVG…DRTF and DVYA…GSEP.

It belongs to the EutL/PduB family. As to quaternary structure, homotrimerizes to form a pseudohexamer with a central pore. The trimers pack into an array. Both forms interact with shell protein PduA. Post-translationally, in purified BMCs seen as a 30.0 kDa and 25.0 kDa form; the smaller form is called PduB'.

The protein resides in the bacterial microcompartment. It functions in the pathway polyol metabolism; 1,2-propanediol degradation. Its function is as follows. The two proteins produced are among the major shell proteins of the bacterial microcompartment (BMC) shell dedicated to 1,2-propanediol (1,2-PD) degradation. Overexpression of the gene gives large amorphous intracellular structures; when only PduB is overexpressed large circular bodies are observed which contain concentric rings, whereas with PduB' overexpression internal bodies with regular straight-lined structures were generated. The N-terminus of the long form (PduB) is required for correct formation of BMCs. May play a major role in binding the enzyme contents to the shell. In terms of biological role, expression of a cosmid containing the full 21-gene pdu operon in E.coli allows E.coli to grow on 1,2-propanediol (1,2-PD) with the appearance of BMCs in its cytoplasm. Functionally, the 1,2-PD-specific bacterial microcompartment (BMC) concentrates low levels of 1,2-PD catabolic enzymes, concentrates volatile reaction intermediates thus enhancing pathway flux and keeps the level of toxic, mutagenic propionaldehyde low. This is Bacterial microcompartment shell protein PduB from Citrobacter freundii.